Reading from the N-terminus, the 664-residue chain is Probable 3',5'-cyclic phosphodiesterase pde-1 (664 aa).

Disordered stretches follow at residues 24-60 (TSSA…SIKI) and 113-142 (RNQK…KSYD). 2 stretches are compositionally biased toward basic and acidic residues: residues 28–38 (SEEHGDSDKKL) and 114–130 (NQKE…EKEP). The PDEase domain occupies 256–634 (VQCPIPPEIA…AHWKERAAKE (379 aa)). Histidine 333 functions as the Proton donor in the catalytic mechanism. A divalent metal cation contacts are provided by histidine 337, histidine 373, aspartate 374, and aspartate 480. Disordered stretches follow at residues 564–597 (DSLF…TSPS) and 630–664 (RAAK…VTTN). Over residues 630 to 644 (RAAKEEEERKIKEAA) the composition is skewed to basic and acidic residues.

Belongs to the cyclic nucleotide phosphodiesterase family. As to quaternary structure, interacts with cmd-1 in the presence of Ca(2+). It depends on a divalent metal cation as a cofactor. Expressed in AFD thermosensory neurons.

The catalysed reaction is a nucleoside 3',5'-cyclic phosphate + H2O = a nucleoside 5'-phosphate + H(+). Its function is as follows. Redundantly with pde-5, plays a role in the AFD thermosensory neurons to regulate microvilli receptive ending morphology, possibly by regulating cGMP levels. This chain is Probable 3',5'-cyclic phosphodiesterase pde-1 (pde-1), found in Caenorhabditis elegans.